Consider the following 358-residue polypeptide: Alanine racemase (358 aa).

Catalysis depends on Lys-35, which acts as the Proton acceptor; specific for D-alanine. N6-(pyridoxal phosphate)lysine is present on Lys-35. Residue Arg-130 participates in substrate binding. The active-site Proton acceptor; specific for L-alanine is Tyr-255. Position 303 (Met-303) interacts with substrate.

The protein belongs to the alanine racemase family. Pyridoxal 5'-phosphate is required as a cofactor.

The catalysed reaction is L-alanine = D-alanine. The protein operates within amino-acid biosynthesis; D-alanine biosynthesis; D-alanine from L-alanine: step 1/1. Catalyzes the interconversion of L-alanine and D-alanine. May also act on other amino acids. This is Alanine racemase (alr) from Shewanella putrefaciens (strain CN-32 / ATCC BAA-453).